A 257-amino-acid chain; its full sequence is Cytochrome c oxidase subunit 3 (257 aa).

The next 6 helical transmembrane spans lie at 15-35, 82-102, 124-144, 156-176, 194-214, and 235-255; these read PWPL…VKWF, GMIL…WGFF, FLSA…VTWA, CLQG…LQGL, FFLA…FLMI, and AWYW…IYWW.

Belongs to the cytochrome c oxidase subunit 3 family. Component of the cytochrome c oxidase (complex IV, CIV), a multisubunit enzyme composed of a catalytic core of 3 subunits and several supernumerary subunits. The complex exists as a monomer or a dimer and forms supercomplexes (SCs) in the inner mitochondrial membrane with ubiquinol-cytochrome c oxidoreductase (cytochrome b-c1 complex, complex III, CIII).

The protein localises to the mitochondrion inner membrane. It catalyses the reaction 4 Fe(II)-[cytochrome c] + O2 + 8 H(+)(in) = 4 Fe(III)-[cytochrome c] + 2 H2O + 4 H(+)(out). Functionally, component of the cytochrome c oxidase, the last enzyme in the mitochondrial electron transport chain which drives oxidative phosphorylation. The respiratory chain contains 3 multisubunit complexes succinate dehydrogenase (complex II, CII), ubiquinol-cytochrome c oxidoreductase (cytochrome b-c1 complex, complex III, CIII) and cytochrome c oxidase (complex IV, CIV), that cooperate to transfer electrons derived from NADH and succinate to molecular oxygen, creating an electrochemical gradient over the inner membrane that drives transmembrane transport and the ATP synthase. Cytochrome c oxidase is the component of the respiratory chain that catalyzes the reduction of oxygen to water. Electrons originating from reduced cytochrome c in the intermembrane space (IMS) are transferred via the dinuclear copper A center (CU(A)) of subunit 2 and heme A of subunit 1 to the active site in subunit 1, a binuclear center (BNC) formed by heme A3 and copper B (CU(B)). The BNC reduces molecular oxygen to 2 water molecules using 4 electrons from cytochrome c in the IMS and 4 protons from the mitochondrial matrix. The chain is Cytochrome c oxidase subunit 3 (COIII) from Artemia franciscana (Brine shrimp).